Here is a 184-residue protein sequence, read N- to C-terminus: Thymidine kinase (184 aa).

Residues 10–17 (GPMYSGKT) and 83–86 (DEVQ) each bind ATP. Catalysis depends on Glu-84, which acts as the Proton acceptor. The Zn(2+) site is built by Cys-140, Cys-143, Cys-173, and Cys-176.

The protein belongs to the thymidine kinase family. Homotetramer.

It localises to the cytoplasm. It catalyses the reaction thymidine + ATP = dTMP + ADP + H(+). The chain is Thymidine kinase from Thermotoga petrophila (strain ATCC BAA-488 / DSM 13995 / JCM 10881 / RKU-1).